The sequence spans 369 residues: Queuine tRNA-ribosyltransferase (369 aa).

Catalysis depends on Asp89, which acts as the Proton acceptor. Substrate is bound by residues 89-93, Asp142, Gln184, and Gly211; that span reads DSGGF. The interval 242–248 is RNA binding; sequence GGGSPEL. Residue Asp261 is the Nucleophile of the active site. An RNA binding; important for wobble base 34 recognition region spans residues 266–270; that stretch reads TRIAR. Residues Cys299, Cys301, Cys304, and His330 each contribute to the Zn(2+) site.

The protein belongs to the queuine tRNA-ribosyltransferase family. Homodimer. Within each dimer, one monomer is responsible for RNA recognition and catalysis, while the other monomer binds to the replacement base PreQ1. The cofactor is Zn(2+).

It carries out the reaction 7-aminomethyl-7-carbaguanine + guanosine(34) in tRNA = 7-aminomethyl-7-carbaguanosine(34) in tRNA + guanine. Its pathway is tRNA modification; tRNA-queuosine biosynthesis. Its function is as follows. Catalyzes the base-exchange of a guanine (G) residue with the queuine precursor 7-aminomethyl-7-deazaguanine (PreQ1) at position 34 (anticodon wobble position) in tRNAs with GU(N) anticodons (tRNA-Asp, -Asn, -His and -Tyr). Catalysis occurs through a double-displacement mechanism. The nucleophile active site attacks the C1' of nucleotide 34 to detach the guanine base from the RNA, forming a covalent enzyme-RNA intermediate. The proton acceptor active site deprotonates the incoming PreQ1, allowing a nucleophilic attack on the C1' of the ribose to form the product. After dissociation, two additional enzymatic reactions on the tRNA convert PreQ1 to queuine (Q), resulting in the hypermodified nucleoside queuosine (7-(((4,5-cis-dihydroxy-2-cyclopenten-1-yl)amino)methyl)-7-deazaguanosine). The sequence is that of Queuine tRNA-ribosyltransferase from Thermotoga neapolitana (strain ATCC 49049 / DSM 4359 / NBRC 107923 / NS-E).